Consider the following 435-residue polypeptide: tRNA modification GTPase MnmE (435 aa).

The (6S)-5-formyl-5,6,7,8-tetrahydrofolate site is built by arginine 24, glutamate 85, and arginine 124. A TrmE-type G domain is found at glycine 220–arginine 361. Asparagine 230 contributes to the K(+) binding site. GTP contacts are provided by residues asparagine 230–serine 235, serine 249–threonine 255, and aspartate 274–glycine 277. Residue serine 234 participates in Mg(2+) binding. K(+) contacts are provided by serine 249, isoleucine 251, and threonine 254. Threonine 255 serves as a coordination point for Mg(2+). Position 435 (lysine 435) interacts with (6S)-5-formyl-5,6,7,8-tetrahydrofolate.

This sequence belongs to the TRAFAC class TrmE-Era-EngA-EngB-Septin-like GTPase superfamily. TrmE GTPase family. In terms of assembly, homodimer. Heterotetramer of two MnmE and two MnmG subunits. K(+) serves as cofactor.

It localises to the cytoplasm. Exhibits a very high intrinsic GTPase hydrolysis rate. Involved in the addition of a carboxymethylaminomethyl (cmnm) group at the wobble position (U34) of certain tRNAs, forming tRNA-cmnm(5)s(2)U34. In Gluconacetobacter diazotrophicus (strain ATCC 49037 / DSM 5601 / CCUG 37298 / CIP 103539 / LMG 7603 / PAl5), this protein is tRNA modification GTPase MnmE.